A 500-amino-acid polypeptide reads, in one-letter code: 2-isopropylmalate synthase (500 aa).

Positions 5-266 (LFIFDTTLRD…ITNITTNKIY (262 aa)) constitute a Pyruvate carboxyltransferase domain. Mn(2+)-binding residues include aspartate 14, histidine 202, histidine 204, and asparagine 238. The segment at 389 to 500 (KLEYLQVTSG…VDAINKFIVD (112 aa)) is regulatory domain.

It belongs to the alpha-IPM synthase/homocitrate synthase family. LeuA type 1 subfamily. In terms of assembly, homodimer. Requires Mn(2+) as cofactor.

It localises to the cytoplasm. It catalyses the reaction 3-methyl-2-oxobutanoate + acetyl-CoA + H2O = (2S)-2-isopropylmalate + CoA + H(+). Its pathway is amino-acid biosynthesis; L-leucine biosynthesis; L-leucine from 3-methyl-2-oxobutanoate: step 1/4. Its function is as follows. Catalyzes the condensation of the acetyl group of acetyl-CoA with 3-methyl-2-oxobutanoate (2-ketoisovalerate) to form 3-carboxy-3-hydroxy-4-methylpentanoate (2-isopropylmalate). This Parabacteroides distasonis (strain ATCC 8503 / DSM 20701 / CIP 104284 / JCM 5825 / NCTC 11152) protein is 2-isopropylmalate synthase.